A 285-amino-acid chain; its full sequence is 4-diphosphocytidyl-2-C-methyl-D-erythritol kinase (285 aa).

Residue Lys-10 is part of the active site. Residue 94–104 coordinates ATP; it reads PVAAGLGGGSS. Asp-136 is an active-site residue.

Belongs to the GHMP kinase family. IspE subfamily.

It catalyses the reaction 4-CDP-2-C-methyl-D-erythritol + ATP = 4-CDP-2-C-methyl-D-erythritol 2-phosphate + ADP + H(+). It participates in isoprenoid biosynthesis; isopentenyl diphosphate biosynthesis via DXP pathway; isopentenyl diphosphate from 1-deoxy-D-xylulose 5-phosphate: step 3/6. Its function is as follows. Catalyzes the phosphorylation of the position 2 hydroxy group of 4-diphosphocytidyl-2C-methyl-D-erythritol. This chain is 4-diphosphocytidyl-2-C-methyl-D-erythritol kinase, found in Latilactobacillus sakei subsp. sakei (strain 23K) (Lactobacillus sakei subsp. sakei).